The primary structure comprises 193 residues: uncharacterized protein (193 aa).

The stretch at threonine 86–glycine 181 forms a coiled coil.

This is an uncharacterized protein from Streptococcus pyogenes serotype M6 (strain ATCC BAA-946 / MGAS10394).